Reading from the N-terminus, the 158-residue chain is UPF0262 protein RSKD131_1985 (158 aa).

The protein belongs to the UPF0262 family.

This chain is UPF0262 protein RSKD131_1985, found in Cereibacter sphaeroides (strain KD131 / KCTC 12085) (Rhodobacter sphaeroides).